The sequence spans 177 residues: ATP synthase subunit delta (177 aa).

It belongs to the ATPase delta chain family. As to quaternary structure, F-type ATPases have 2 components, F(1) - the catalytic core - and F(0) - the membrane proton channel. F(1) has five subunits: alpha(3), beta(3), gamma(1), delta(1), epsilon(1). F(0) has three main subunits: a(1), b(2) and c(10-14). The alpha and beta chains form an alternating ring which encloses part of the gamma chain. F(1) is attached to F(0) by a central stalk formed by the gamma and epsilon chains, while a peripheral stalk is formed by the delta and b chains.

It is found in the cell inner membrane. Its function is as follows. F(1)F(0) ATP synthase produces ATP from ADP in the presence of a proton or sodium gradient. F-type ATPases consist of two structural domains, F(1) containing the extramembraneous catalytic core and F(0) containing the membrane proton channel, linked together by a central stalk and a peripheral stalk. During catalysis, ATP synthesis in the catalytic domain of F(1) is coupled via a rotary mechanism of the central stalk subunits to proton translocation. Functionally, this protein is part of the stalk that links CF(0) to CF(1). It either transmits conformational changes from CF(0) to CF(1) or is implicated in proton conduction. This chain is ATP synthase subunit delta, found in Haemophilus influenzae (strain PittGG).